Reading from the N-terminus, the 284-residue chain is Pantothenate synthetase (284 aa).

Position 30-37 (30-37 (MGNLHDGH)) interacts with ATP. The active-site Proton donor is the H37. Q61 is a binding site for (R)-pantoate. Q61 contributes to the beta-alanine binding site. 149–152 (GEKD) lines the ATP pocket. Q155 serves as a coordination point for (R)-pantoate. Residues V178 and 186–189 (LSSR) contribute to the ATP site.

It belongs to the pantothenate synthetase family. In terms of assembly, homodimer.

Its subcellular location is the cytoplasm. The catalysed reaction is (R)-pantoate + beta-alanine + ATP = (R)-pantothenate + AMP + diphosphate + H(+). Its pathway is cofactor biosynthesis; (R)-pantothenate biosynthesis; (R)-pantothenate from (R)-pantoate and beta-alanine: step 1/1. In terms of biological role, catalyzes the condensation of pantoate with beta-alanine in an ATP-dependent reaction via a pantoyl-adenylate intermediate. The sequence is that of Pantothenate synthetase from Photorhabdus laumondii subsp. laumondii (strain DSM 15139 / CIP 105565 / TT01) (Photorhabdus luminescens subsp. laumondii).